The primary structure comprises 417 residues: Succinate--CoA ligase [ADP-forming] subunit beta, mitochondrial (417 aa).

A mitochondrion-targeting transit peptide spans 1–24 (MLRKLANQSLSVAGKWQQQQLRRL). The ATP-grasp domain occupies 32–275 (AELMSKYGIN…SSQEDPREVA (244 aa)). Residues Lys-71, 78 to 80 (GRG), and Glu-138 contribute to the ATP site. Mg(2+)-binding residues include Asn-230 and Asp-244. Substrate-binding positions include Asn-295 and 352 to 354 (GIM).

The protein belongs to the succinate/malate CoA ligase beta subunit family. As to quaternary structure, heterodimer of an alpha and a beta subunit. The cofactor is Mg(2+). As to expression, expressed in roots, stems, flowers, leaves and fruits.

It localises to the mitochondrion. The catalysed reaction is succinate + ATP + CoA = succinyl-CoA + ADP + phosphate. It functions in the pathway carbohydrate metabolism; tricarboxylic acid cycle; succinate from succinyl-CoA (ligase route): step 1/1. In terms of biological role, succinyl-CoA synthetase functions in the citric acid cycle (TCA), coupling the hydrolysis of succinyl-CoA to the synthesis of ATP and thus represents the only step of substrate-level phosphorylation in the TCA. The beta subunit provides nucleotide specificity of the enzyme and binds the substrate succinate, while the binding sites for coenzyme A and phosphate are found in the alpha subunit. The sequence is that of Succinate--CoA ligase [ADP-forming] subunit beta, mitochondrial from Solanum lycopersicum (Tomato).